Here is a 212-residue protein sequence, read N- to C-terminus: WAP four-disulfide core domain protein 1 (212 aa).

Residues 1 to 26 (MGSCDRKALWALSFLLLLLGSSSVQG) form the signal peptide. The interval 43–62 (EEVAATGSRQPHADRCPPPP) is disordered. One can recognise a WAP domain in the interval 51–100 (RQPHADRCPPPPRTLPPGACQATRCQSDSECPRHRRCCYNGCAYACLEAV). 4 disulfides stabilise this stretch: Cys-58-Cys-88, Cys-70-Cys-92, Cys-75-Cys-87, and Cys-81-Cys-96. A disordered region spans residues 191 to 212 (EYPEGDSKYVAEPGKGQQRHFP).

As to expression, vascular smooth muscle and prostate. Periacinar ring.

It localises to the secreted. Has growth inhibitory activity. The chain is WAP four-disulfide core domain protein 1 (Wfdc1) from Rattus norvegicus (Rat).